The following is a 450-amino-acid chain: Protein tailless (450 aa).

The nuclear receptor DNA-binding region spans 31-108 (HVPCKVCRDH…VGMNKDAVQH (78 aa)). 2 consecutive NR C4-type zinc fingers follow at residues 34–54 (CKVC…CDGC) and 70–96 (CKSQ…LRKC). The NR LBD domain occupies 187 to 448 (VPRVPHHPVH…RLISDMYSQR (262 aa)).

This sequence belongs to the nuclear hormone receptor family. NR2 subfamily. As to quaternary structure, monomer.

The protein resides in the nucleus. Orphan receptor that binds DNA as a monomer to hormone response elements (HRE) containing an extended core motif half-site sequence 5'-AAGTCA-3' in which the 5' flanking nucleotides participate in determining receptor specificity. This receptor binds to the consensus sequence [AG][AG]AAGTCAA. Plays a key role in the establishment of non-metameric domains at the anterior and posterior poles of the embryo. It may also play a role in the nervous system. The maternal terminal pathway activates the tll gene in the termini; TLL activity then represses segmentation and activates terminal-specific genes in these domains. Involved in the regulation of early eye development. In the embryonic visual system anlage drives cells to optic lobe as opposed to Bolwig's organ fate. The sequence is that of Protein tailless (tll) from Drosophila virilis (Fruit fly).